The following is an 865-amino-acid chain: Protein translocase subunit SecA (865 aa).

ATP is bound by residues glutamine 85, 103 to 107 (GEGKT), and aspartate 505. Zn(2+) contacts are provided by cysteine 847, cysteine 849, cysteine 858, and histidine 859.

This sequence belongs to the SecA family. In terms of assembly, monomer and homodimer. Part of the essential Sec protein translocation apparatus which comprises SecA, SecYEG and auxiliary proteins SecDF. Other proteins may also be involved. Zn(2+) serves as cofactor.

Its subcellular location is the cell membrane. The protein resides in the cytoplasm. It carries out the reaction ATP + H2O + cellular proteinSide 1 = ADP + phosphate + cellular proteinSide 2.. Functionally, part of the Sec protein translocase complex. Interacts with the SecYEG preprotein conducting channel. Has a central role in coupling the hydrolysis of ATP to the transfer of proteins into and across the cell membrane, serving as an ATP-driven molecular motor driving the stepwise translocation of polypeptide chains across the membrane. The protein is Protein translocase subunit SecA of Lactococcus lactis subsp. cremoris (strain MG1363).